We begin with the raw amino-acid sequence, 63 residues long: Frenatin 1.1 (63 aa).

The signal sequence occupies residues 1-22 (MAFLKKSLFLVLFLGLVSLSIC). The propeptide occupies 23–49 (EKEKKEQEDEDENEEEKESEEGSEEKR). The interval 25-63 (EKKEQEDEDENEEEKESEEGSEEKRGLLDTLGGILGLGR) is disordered. Over residues 30-45 (EDEDENEEEKESEEGS) the composition is skewed to acidic residues. At Leu61 the chain carries Leucine amide.

In terms of tissue distribution, expressed by the skin glands.

Its subcellular location is the secreted. Antimicrobial peptide with selective activity. Is only active against Micrococcus luteus (MIC=25 ug/ml) and not against Bacillus cereus, Escherichia coli, Leuconostoc mesenteroides, Micrococcus luteus, Pastewella haemolytica, Staphylococcus aureus, Streptococcus faecalis and Streptococcus uberis. The chain is Frenatin 1.1 from Nyctimystes infrafrenatus (White-lipped tree frog).